Here is a 236-residue protein sequence, read N- to C-terminus: 3-oxoacyl-[acyl-carrier-protein] reductase (236 aa).

Met-1 is modified (N-acetylmethionine). NADP(+) contacts are provided by residues 11–14 (SRGI) and 34–35 (RN). Residue Lys-40 is modified to N6-acetyllysine. Residue 83 to 85 (AAG) coordinates NADP(+). Residue Lys-96 is modified to N6-acetyllysine. Residue Ser-134 participates in substrate binding. NADP(+)-binding positions include Tyr-147, Lys-151, and 180–182 (IHT). Tyr-147 functions as the Proton acceptor in the catalytic mechanism. Lys-194 carries the post-translational modification N6-acetyllysine.

The protein belongs to the short-chain dehydrogenases/reductases (SDR) family. As to quaternary structure, homotetramer (in vitro). Heterotetramer with HSD17B8; contains two molecules each of HSD17B8 and CBR4. Does not form homotetramers when HSD17B8 is coexpressed, only heterotetramers (in vitro).

The protein resides in the mitochondrion matrix. The enzyme catalyses a (3R)-hydroxyacyl-[ACP] + NADP(+) = a 3-oxoacyl-[ACP] + NADPH + H(+). It carries out the reaction a quinone + NADPH + H(+) = a quinol + NADP(+). Its pathway is lipid metabolism; fatty acid biosynthesis. Functionally, component of the heterotetramer complex KAR (3-ketoacyl-[acyl carrier protein] reductase or 3-ketoacyl-[ACP] reductase) that forms part of the mitochondrial fatty acid synthase (mtFAS). Beta-subunit of the KAR heterotetramer complex, responsible for the 3-ketoacyl-ACP reductase activity of the mtFAS, reduces 3-oxoacyl-[ACP] to (3R)-hydroxyacyl-[ACP] in a NADPH-dependent manner with no chain length preference, thereby participating in mitochondrial fatty acid biosynthesis. The homotetramer has NADPH-dependent quinone reductase activity (in vitro), hence could play a role in protection against cytotoxicity of exogenous quinones. As a heterotetramer, it can also reduce 9,10-phenanthrenequinone, 1,4-benzoquinone and various other o-quinones and p-quinones (in vitro). In Rattus norvegicus (Rat), this protein is 3-oxoacyl-[acyl-carrier-protein] reductase (Cbr4).